Reading from the N-terminus, the 518-residue chain is Glutamate--cysteine ligase (518 aa).

Belongs to the glutamate--cysteine ligase type 1 family. Type 1 subfamily.

The enzyme catalyses L-cysteine + L-glutamate + ATP = gamma-L-glutamyl-L-cysteine + ADP + phosphate + H(+). The protein operates within sulfur metabolism; glutathione biosynthesis; glutathione from L-cysteine and L-glutamate: step 1/2. The protein is Glutamate--cysteine ligase of Escherichia coli O8 (strain IAI1).